A 169-amino-acid polypeptide reads, in one-letter code: Keratin-associated protein 9-7 (169 aa).

17 repeat units span residues Cys8 to Thr12, Cys13 to Thr17, Cys32 to Ser36, Cys37 to Ser41, Cys46 to Thr50, Cys51 to Thr55, Cys56 to Thr60, Cys61 to Thr65, Cys75 to Pro79, Cys80 to Ile84, Cys85 to Ser89, Cys90 to Thr94, Cys100 to Ser104, Cys139 to Ala143, Cys144 to Thr148, Cys149 to Thr153, and Cys163 to Ala167. A 17 X 5 AA repeats of C-C-[VGSREQH]-[SQTPN]-[STPAI] region spans residues Cys8–Ala167.

The protein belongs to the KRTAP type 9 family. As to quaternary structure, interacts with hair keratins.

In terms of biological role, in the hair cortex, hair keratin intermediate filaments are embedded in an interfilamentous matrix, consisting of hair keratin-associated proteins (KRTAP), which are essential for the formation of a rigid and resistant hair shaft through their extensive disulfide bond cross-linking with abundant cysteine residues of hair keratins. The matrix proteins include the high-sulfur and high-glycine-tyrosine keratins. The chain is Keratin-associated protein 9-7 from Homo sapiens (Human).